The primary structure comprises 670 residues: DNA-binding transcriptional activator HyfR (670 aa).

Positions 169–311 constitute a GAF domain; the sequence is DLDDLIADVA…HIADRIAIAV (143 aa). The Cys-rich segment, might bind a metal cluster motif lies at 207–221; sequence CSDLSASHCACLPRC. Residues 347–576 form the Sigma-54 factor interaction domain; it reads IIYQSQAMED…LENVIERAVL (230 aa). ATP contacts are provided by residues 375 to 382 and 438 to 447; these read GETGTGKE and ADGGTLFLDE. Residues 641–660 constitute a DNA-binding region (H-T-H motif); that stretch reads PRGAATRLGMKRTTLLSRMQ.

A transcriptional activator of its own operon; when overexpressed operon expression is strongly enhanced by low pH (under pH 6.0), strongly inhibited by O(2) but only weakly stimulated by fumarate. Expression in situ is very weak. This chain is DNA-binding transcriptional activator HyfR, found in Escherichia coli (strain K12).